We begin with the raw amino-acid sequence, 23 residues long: Dahlein-4.3 (23 aa).

As to expression, expressed by the skin dorsal glands.

It localises to the secreted. Functionally, has no antimicrobial activity. The polypeptide is Dahlein-4.3 (Ranoidea dahlii (Dahl's aquatic frog)).